A 445-amino-acid polypeptide reads, in one-letter code: Phosphoglucosamine mutase (445 aa).

Ser-102 functions as the Phosphoserine intermediate in the catalytic mechanism. Residues Ser-102, Asp-241, Asp-243, and Asp-245 each coordinate Mg(2+). Position 102 is a phosphoserine (Ser-102).

Belongs to the phosphohexose mutase family. Mg(2+) serves as cofactor. Activated by phosphorylation.

It carries out the reaction alpha-D-glucosamine 1-phosphate = D-glucosamine 6-phosphate. Catalyzes the conversion of glucosamine-6-phosphate to glucosamine-1-phosphate. This chain is Phosphoglucosamine mutase, found in Shewanella sp. (strain W3-18-1).